The sequence spans 38 residues: Large ribosomal subunit protein bL36 (38 aa).

This sequence belongs to the bacterial ribosomal protein bL36 family.

This Roseiflexus castenholzii (strain DSM 13941 / HLO8) protein is Large ribosomal subunit protein bL36.